Reading from the N-terminus, the 315-residue chain is ATP synthase gamma chain (315 aa).

It belongs to the ATPase gamma chain family. In terms of assembly, F-type ATPases have 2 components, CF(1) - the catalytic core - and CF(0) - the membrane proton channel. CF(1) has five subunits: alpha(3), beta(3), gamma(1), delta(1), epsilon(1). CF(0) has three main subunits: a, b and c.

The protein localises to the cellular thylakoid membrane. Produces ATP from ADP in the presence of a proton gradient across the membrane. The gamma chain is believed to be important in regulating ATPase activity and the flow of protons through the CF(0) complex. The sequence is that of ATP synthase gamma chain from Nostoc sp. (strain PCC 7120 / SAG 25.82 / UTEX 2576).